The sequence spans 121 residues: Small ribosomal subunit protein uS13 (121 aa).

The segment at 91 to 121 (HRRGLPVRGQKTKNNARTRKGPVKTVANKKK) is disordered.

Belongs to the universal ribosomal protein uS13 family. As to quaternary structure, part of the 30S ribosomal subunit. Forms a loose heterodimer with protein S19. Forms two bridges to the 50S subunit in the 70S ribosome.

Its function is as follows. Located at the top of the head of the 30S subunit, it contacts several helices of the 16S rRNA. In the 70S ribosome it contacts the 23S rRNA (bridge B1a) and protein L5 of the 50S subunit (bridge B1b), connecting the 2 subunits; these bridges are implicated in subunit movement. Contacts the tRNAs in the A and P-sites. The protein is Small ribosomal subunit protein uS13 of Staphylococcus aureus (strain Mu3 / ATCC 700698).